The sequence spans 91 residues: Thioredoxin (91 aa).

The Thioredoxin domain occupies 2-91; it reads SDSIVHVTDD…SRQSEVEATK (90 aa). Cys33 and Cys36 are joined by a disulfide.

It belongs to the thioredoxin family.

In terms of biological role, participates in various redox reactions through the reversible oxidation of its active center dithiol to a disulfide and catalyzes dithiol-disulfide exchange reactions. The protein is Thioredoxin (trxA) of Thiocapsa roseopersicina.